Consider the following 72-residue polypeptide: ATP-dependent Clp protease ATP-binding subunit ClpA homolog (72 aa).

It belongs to the ClpA/ClpB family.

The protein resides in the plastid. Its subcellular location is the chloroplast. In terms of biological role, may interact with a ClpP-like protease involved in degradation of denatured proteins in the chloroplast. This is ATP-dependent Clp protease ATP-binding subunit ClpA homolog from Populus euphratica (Euphrates poplar).